A 1017-amino-acid polypeptide reads, in one-letter code: MKFLKLPQSYHNGGIHSIDVNQDNTILVSGGTDNKIGVWNLKKLIELSKLVSTHNSPEVRLKLKSLEPKQYITCHKSLINVVRFFKGDNKRFISSDVNGNVFFHTLHEQPETKQLFPFKSIETSEVNPVVDLTISADNRLIAWSTNNGKVYLYDVVKDTFQELTSICHEKPIIQRSIAFDPSNNYLITVGDDTQINVFQYSYEKDDTSTTTYKFRLIYKISKLFSQNPLNVRYKRISWSPDGNLVSIPTASKNQTMLISLISRSEKWTNIESLVGHDFACDVVKFNPKIFSSKENDTSKVHSVIASGGSDRTMAIWNTSKSTPITVLQDAVQGEILDITWTTDGTSLLFCTSQGKLCIGNFEPNELGYTFSQETMERFVQLQNNLIEPMNFRYPHEQTVGNRKQLPPIEFLSQKNAISTTTSSSNTVENDKKNAEDNVGVSNQSKSTTTTTTTTIKGGVITPEVIPPPKLQSLDDDIDGDGDDEEHKSGGMLDSVMNDRTQSSPRKLNKPKPIAPVVSDSTTQSLSFNKQKVTTKNGKRRIQPMLISSGNSAPSDLPRSNSVIKPVVNTTKSTMEFEKPSYSVSEEFYKQNKRPRTEETTGSNNNKKLKREMEPVKFIGSVILNPNTSFSKIRLATPKVRLFFQLKSKTDDDGVFILDIKNGSGNESKPSRLTYMKKDKEIWCDFIPKYIQLATEGSNFWAVTTVDGTILTYSHVSGKRLLPSIVLGSPISFLESYDKYLMVVTCIGELYVWDMEIKKNVLKSSISPLLELYNKEGLVKSDNITLCAVTSYGIPLVTLSNGSGYLFNKDLGVWQTITESWWCFGSHYWDSTQTGNSSGGGGGSGGSNNKRSLQTMNMFNDEQSIIELLEHKTNEEILRKTRTGRGKYFNKISKNMLMKEGFESLENTISISHLENRILCCELLGENKDFHKFFTTYVQRICELGFKAKLFEVCDELLGPIDTDTAKPPNENNWEPKICGFDKRELLKEIITSCSQFRDAQRVLVHFGKKIGVVIDES.

WD repeat units lie at residues Tyr10–Lys49, Cys74–Pro117, Ser124–Leu163, Cys167–Ser208, Pro228–Glu271, Gly275–Val326, and Ala330–Ser371. Residues Ile417–Ser561 form a disordered region. A compositionally biased stretch (acidic residues) spans Leu473–Asp483. 2 stretches are compositionally biased toward polar residues: residues Ser518–Lys535 and Leu545–Ser561.

Belongs to the WD repeat HIR1 family.

It localises to the nucleus. Required for replication-independent chromatin assembly and for the periodic repression of histone gene transcription during the cell cycle. The protein is Protein HIR2 (HIR2) of Candida albicans (strain SC5314 / ATCC MYA-2876) (Yeast).